The primary structure comprises 675 residues: MSHVANKLLVTCALPYANGSIHLGHILEHIQADIWVRYQRMRGKEVHFICADDAHGTPIMLKAQQLGITPEAMIEEMSKEHQQDFAGFNISYDNYHSTHSEENRQLSTKIYLALKKNGHIKSKTISQLYDEEKGMFLPDRFVKGTCPKCKAPDQYGDNCEVCGSTYSPTELINPRSVVSGSTPVMRETEHYFFDLPAFSNMLQEWIRSGALQEQVANKMQEWFDSGLQQWDITRDAPYFGFEIPDAPGKYFYVWLDAPIGYMGSFLNLCEKRGDLSFDEFWNKESKTDLYHFIGKDIVYFHSLFWPAVLEGSEYRKPTNLFVHGYVTVNGAKMSKSRGTFITARAYLDHFDADCLRYYYAAKLSSRIDDIDLNLEDFVQRVNSDIVNKVVNLASRTAGFISKRFDGKLAANLDDAKLYQHFVDMQESIAQCFENREFGKAIREIMALADEANRYIDEKAPWVVAKQEGKEAELQAICTMGINLFRVLMTYLKPILPSLTERSEAFLQTELTWNALSQPLLNHEITKFKALFNRIEMDKANAMVEASKSTIAPVKEITGPLADAPIQETIKFDDFAKIDMRIAEIKQADFVDGSDKLLKLILDLGGETRQVFSGIRSAYPDPKVLEGRLTVMVANLAPRKMRFGISEGMVMAAGPGGEDIFLLSPDSGAKPGHQVK.

A 'HIGH' region motif is present at residues P15–H25. Residues C146, C149, C159, and C162 each contribute to the Zn(2+) site. Residues K332 to S336 carry the 'KMSKS' region motif. Residue K335 participates in ATP binding. Positions D573–K675 constitute a tRNA-binding domain.

Belongs to the class-I aminoacyl-tRNA synthetase family. MetG type 1 subfamily. As to quaternary structure, homodimer. Zn(2+) serves as cofactor.

The protein localises to the cytoplasm. It catalyses the reaction tRNA(Met) + L-methionine + ATP = L-methionyl-tRNA(Met) + AMP + diphosphate. In terms of biological role, is required not only for elongation of protein synthesis but also for the initiation of all mRNA translation through initiator tRNA(fMet) aminoacylation. The chain is Methionine--tRNA ligase from Proteus mirabilis (strain HI4320).